We begin with the raw amino-acid sequence, 258 residues long: Imidazole glycerol phosphate synthase subunit HisF (258 aa).

Residues Asp11 and Asp130 contribute to the active site.

Belongs to the HisA/HisF family. As to quaternary structure, heterodimer of HisH and HisF.

It localises to the cytoplasm. The catalysed reaction is 5-[(5-phospho-1-deoxy-D-ribulos-1-ylimino)methylamino]-1-(5-phospho-beta-D-ribosyl)imidazole-4-carboxamide + L-glutamine = D-erythro-1-(imidazol-4-yl)glycerol 3-phosphate + 5-amino-1-(5-phospho-beta-D-ribosyl)imidazole-4-carboxamide + L-glutamate + H(+). The protein operates within amino-acid biosynthesis; L-histidine biosynthesis; L-histidine from 5-phospho-alpha-D-ribose 1-diphosphate: step 5/9. In terms of biological role, IGPS catalyzes the conversion of PRFAR and glutamine to IGP, AICAR and glutamate. The HisF subunit catalyzes the cyclization activity that produces IGP and AICAR from PRFAR using the ammonia provided by the HisH subunit. The polypeptide is Imidazole glycerol phosphate synthase subunit HisF (Enterobacter sp. (strain 638)).